A 503-amino-acid polypeptide reads, in one-letter code: Lysine--tRNA ligase (503 aa).

Positions 412 and 419 each coordinate Mg(2+).

Belongs to the class-II aminoacyl-tRNA synthetase family. Homodimer. It depends on Mg(2+) as a cofactor.

Its subcellular location is the cytoplasm. It carries out the reaction tRNA(Lys) + L-lysine + ATP = L-lysyl-tRNA(Lys) + AMP + diphosphate. This Buchnera aphidicola subsp. Schizaphis graminum (strain Sg) protein is Lysine--tRNA ligase.